We begin with the raw amino-acid sequence, 377 residues long: All-trans-retinol dehydrogenase [NAD(+)] ADH4 (377 aa).

Position 47 (cysteine 47) interacts with Zn(2+). Threonine 49 lines the NAD(+) pocket. Zn(2+) contacts are provided by histidine 68, cysteine 98, cysteine 101, cysteine 104, cysteine 112, and cysteine 179. Residues 204 to 209, aspartate 228, lysine 233, 297 to 299, 320 to 322, and arginine 372 each bind NAD(+); these read GLGCVG, VGA, and TFF.

It belongs to the zinc-containing alcohol dehydrogenase family. Class-II subfamily. In terms of assembly, dimer. It depends on Zn(2+) as a cofactor. As to expression, liver specific.

The protein localises to the cytoplasm. The enzyme catalyses all-trans-retinol + NAD(+) = all-trans-retinal + NADH + H(+). It catalyses the reaction 9-cis-retinol + NAD(+) = 9-cis-retinal + NADH + H(+). It carries out the reaction 20-hydroxy-(5Z,8Z,11Z,14Z)-eicosatetraenoate + NAD(+) = 20-oxo-(5Z,8Z,11Z,14Z)-eicosatetraenoate + NADH + H(+). The catalysed reaction is 20-oxo-(5Z,8Z,11Z,14Z)-eicosatetraenoate + NAD(+) + H2O = (5Z,8Z,11Z,14Z)-eicosatetraenedioate + NADH + 2 H(+). The enzyme catalyses 1,4-benzoquinone + NADH + H(+) = hydroquinone + NAD(+). With respect to regulation, oxidation of 20-HETE is inhibited by low concentrations of N-heptylformamide. Oxidation of 20-HETE is a decreased by 55-65% by either all-trans-retinol or all-trans-retinoic acid. Strongly inhibited by omega-hydroxy fatty acids. Catalyzes the NAD-dependent oxidation of either all-trans-retinol or 9-cis-retinol. Also oxidizes long chain omega-hydroxy fatty acids, such as 20-HETE, producing both the intermediate aldehyde, 20-oxoarachidonate and the end product, a dicarboxylic acid, (5Z,8Z,11Z,14Z)-eicosatetraenedioate. Also catalyzes the reduction of benzoquinones. This is All-trans-retinol dehydrogenase [NAD(+)] ADH4 from Mus musculus (Mouse).